The sequence spans 317 residues: Melanocyte-stimulating hormone receptor (317 aa).

The Extracellular segment spans residues 1 to 37; it reads MPMQEPQRRLLGPFNSTRTGAPHLELSANQTGPWCLH. N-linked (GlcNAc...) asparagine glycans are attached at residues asparagine 15 and asparagine 29. The helical transmembrane segment at 38-63 threads the bilayer; the sequence is VSIPDGLFLSLGLVSLVENVLVVISI. The Cytoplasmic portion of the chain corresponds to 64 to 72; the sequence is AKNQNLHSP. A helical transmembrane segment spans residues 73 to 93; it reads MYYFICCLALSDLLVSVSIVL. Topologically, residues 94–118 are extracellular; it reads ETTLILVLEAGALATRVTVVQQLDN. Residues 119–140 form a helical membrane-spanning segment; sequence VIDVLICASMVSSLCFLGAIAV. At 141–163 the chain is on the cytoplasmic side; sequence DRYISIFYALRYHSIVTLPRARW. The chain crosses the membrane as a helical span at residues 164 to 183; the sequence is AIVAIWVASISSSTLFVAYY. The Extracellular segment spans residues 184–191; it reads NHTAVLLC. Residues 192–211 form a helical membrane-spanning segment; sequence LVTFFLATLALMVVLYVHML. Residues 212–240 are Cytoplasmic-facing; sequence ARAHQHAQAIAQLHKRQHLVHQGFRLKGA. A helical transmembrane segment spans residues 241–266; that stretch reads ATLTILLGIFFLCWGPFFLYLTLIVL. Residues 267-279 lie on the Extracellular side of the membrane; sequence CPKHPTCGCFFKN. A helical transmembrane segment spans residues 280-300; it reads LNLFLALIIFNSIVDPLIYAF. Over 301-317 the chain is Cytoplasmic; it reads RSQELRMTLKEVLLCSW. Cysteine 315 carries S-palmitoyl cysteine lipidation.

The protein belongs to the G-protein coupled receptor 1 family. Interacts with MGRN1, but does not undergo MGRN1-mediated ubiquitination; this interaction competes with GNAS-binding and thus inhibits agonist-induced cAMP production. Interacts with OPN3; the interaction results in a decrease in MC1R-mediated cAMP signaling and ultimately a decrease in melanin production in melanocytes.

It localises to the cell membrane. Its function is as follows. Receptor for MSH (alpha, beta and gamma) and ACTH. The activity of this receptor is mediated by G proteins which activate adenylate cyclase. Mediates melanogenesis, the production of eumelanin (black/brown) and phaeomelanin (red/yellow), via regulation of cAMP signaling in melanocytes. This chain is Melanocyte-stimulating hormone receptor (MC1R), found in Chaetodipus penicillatus (Desert pocket mouse).